A 597-amino-acid polypeptide reads, in one-letter code: Coronatine-insensitive protein homolog 1b (597 aa).

The region spanning 22–64 (SIPEEALHLVLGYVDDPRDREAVSLVCRRWHRIDALTRKHVTV) is the F-box domain. The jasmonate site is built by Arg-92, Arg-353, Tyr-391, Arg-414, and Arg-501.

Interacts with TIFY10C/JAZ8 in a coronatine-dependent manner. Interacts with TIFY3/JAZ1, TIFY6A/JAZ3, TIFY6B/JAZ4, TIFY10A/JAZ6, TIFY10B/JAZ7, TIFY11A/JAZ9, TIFY11B/JAZ10, TIFY11C/JAZ11 and TIFY11D/JAZ12 in a coronatine-dependent manner. Expressed in roots, shoots, leaf sheaths and leaf blades.

In terms of biological role, involved in jasmonate (JA) signaling. Required for jasmonate signaling in plant defense responses. Can complement Arabidopsis coi1-1 mutant and restore jasmonate signaling. Component of SCF(COI1) E3 ubiquitin ligase complexes, which may mediate the ubiquitination and subsequent proteasomal degradation of target proteins, including TIFY/JAZ family. This Oryza sativa subsp. japonica (Rice) protein is Coronatine-insensitive protein homolog 1b.